Here is a 353-residue protein sequence, read N- to C-terminus: tRNA N6-adenosine threonylcarbamoyltransferase (353 aa).

The Fe cation site is built by histidine 119 and histidine 123. Substrate is bound by residues 145–149 (LVSGG), aspartate 178, glycine 191, and asparagine 285. A Fe cation-binding site is contributed by aspartate 313.

It belongs to the KAE1 / TsaD family. Requires Fe(2+) as cofactor.

The protein localises to the cytoplasm. The enzyme catalyses L-threonylcarbamoyladenylate + adenosine(37) in tRNA = N(6)-L-threonylcarbamoyladenosine(37) in tRNA + AMP + H(+). In terms of biological role, required for the formation of a threonylcarbamoyl group on adenosine at position 37 (t(6)A37) in tRNAs that read codons beginning with adenine. Is involved in the transfer of the threonylcarbamoyl moiety of threonylcarbamoyl-AMP (TC-AMP) to the N6 group of A37, together with TsaE and TsaB. TsaD likely plays a direct catalytic role in this reaction. The sequence is that of tRNA N6-adenosine threonylcarbamoyltransferase from Magnetococcus marinus (strain ATCC BAA-1437 / JCM 17883 / MC-1).